Here is a 303-residue protein sequence, read N- to C-terminus: tRNA dimethylallyltransferase (303 aa).

G12–T19 serves as a coordination point for ATP. T14 to T19 contacts substrate. Residues D37–Q40 form an interaction with substrate tRNA region.

This sequence belongs to the IPP transferase family. In terms of assembly, monomer. It depends on Mg(2+) as a cofactor.

It catalyses the reaction adenosine(37) in tRNA + dimethylallyl diphosphate = N(6)-dimethylallyladenosine(37) in tRNA + diphosphate. Its function is as follows. Catalyzes the transfer of a dimethylallyl group onto the adenine at position 37 in tRNAs that read codons beginning with uridine, leading to the formation of N6-(dimethylallyl)adenosine (i(6)A). The sequence is that of tRNA dimethylallyltransferase from Fusobacterium nucleatum subsp. nucleatum (strain ATCC 25586 / DSM 15643 / BCRC 10681 / CIP 101130 / JCM 8532 / KCTC 2640 / LMG 13131 / VPI 4355).